The chain runs to 646 residues: P-selectin (646 aa).

Residues 1–41 (MASCPKAIWNWRFQRAVFRTVQLLCFSVLIFEVINQKEVSA) form the signal peptide. The Extracellular segment spans residues 42–587 (WTYHYSNKTY…QAGPLTIQET (546 aa)). Asn-48, Asn-54, and Asn-80 each carry an N-linked (GlcNAc...) asparagine glycan. The 101-residue stretch at 58-158 (AFCQKYYTDL…PCWKRKRALC (101 aa)) folds into the C-type lectin domain. 17 disulfide bridges follow: Cys-60-Cys-158, Cys-131-Cys-150, Cys-163-Cys-174, Cys-168-Cys-183, Cys-185-Cys-194, Cys-200-Cys-244, Cys-230-Cys-257, Cys-262-Cys-306, Cys-292-Cys-319, Cys-324-Cys-368, Cys-354-Cys-381, Cys-386-Cys-430, Cys-416-Cys-443, Cys-458-Cys-502, Cys-488-Cys-515, Cys-520-Cys-564, and Cys-550-Cys-577. Residues Glu-121, Asn-123, and Asn-124 each contribute to the Ca(2+) site. Asn-123 provides a ligand contact to a carbohydrate. A carbohydrate-binding residues include Glu-133 and Asn-146. Ca(2+) is bound by residues Asn-146 and Asp-147. Residues 159–195 (YRASCQDMSCSKQGECIETIGNYTCSCYPGFYGPECE) enclose the EGF-like domain. The N-linked (GlcNAc...) asparagine glycan is linked to Asn-180. Sushi domains follow at residues 198–259 (RECG…QCVA), 260–321 (VQCP…VCKA), 322–383 (LQCQ…ECQA), 384–445 (VTCA…TCEE), 456–517 (VQCP…TCRA), and 518–579 (VKCA…TCQA). 2 N-linked (GlcNAc...) asparagine glycosylation sites follow: Asn-212 and Asn-219. Asn-336 carries an N-linked (GlcNAc...) asparagine glycan. Asn-481 carries an N-linked (GlcNAc...) asparagine glycan. Asn-532, Asn-539, and Asn-557 each carry an N-linked (GlcNAc...) asparagine glycan. The chain crosses the membrane as a helical span at residues 588-611 (LTYVGGAAAGTTGLVTGSILLALL). At 612–646 (RRRCRQKDDGKSPLNPQSHLGTYGVFTNAAFDPSP) the chain is on the cytoplasmic side. The Endocytosis signal signature appears at 634-637 (YGVF). Residues 637–646 (FTNAAFDPSP) are interaction with SNX17.

It belongs to the selectin/LECAM family. As to quaternary structure, interacts with SNX17. Interacts with SELPLG/PSGL1 and PODXL2 and mediates neutrophil adhesion and leukocyte rolling. This interaction requires the sialyl-Lewis X epitope of SELPLG and PODXL2, and specific tyrosine sulfation on SELPLG. Interacts (via C-type lectin domain) with alpha-IIb/beta3 integrin ITGA2B:ITGB3 and alpha-V/beta-3 integrin ITGAV:ITGB3. Interacts with alpha5/beta1 integrin ITGA5:ITGB1 and alpha4/beta1 integrin ITGA4:ITGB. In terms of tissue distribution, stored in the alpha-granules of platelets and Weibel-Palade bodies of endothelial cells. Upon cell activation by agonists, P-selectin is transported rapidly to the cell surface.

It is found in the cell membrane. Ca(2+)-dependent receptor for myeloid cells that binds to carbohydrates on neutrophils and monocytes. Mediates the interaction of activated endothelial cells or platelets with leukocytes. The ligand recognized is sialyl-Lewis X. Mediates rapid rolling of leukocyte rolling over vascular surfaces during the initial steps in inflammation through interaction with SELPLG. Mediates cell-cell interactions and cell adhesion via the interaction with integrin alpha-IIb/beta3 (ITGA2B:ITGB3) and integrin alpha-V/beta-3 (ITGAV:ITGB3). The chain is P-selectin (SELP) from Bos taurus (Bovine).